The primary structure comprises 65 residues: Large ribosomal subunit protein bL35 (65 aa).

The segment covering 1–16 (MPKQKTHRASAKRFKR) has biased composition (basic residues). Residues 1-20 (MPKQKTHRASAKRFKRTGSG) form a disordered region.

The protein belongs to the bacterial ribosomal protein bL35 family.

The sequence is that of Large ribosomal subunit protein bL35 from Streptococcus equi subsp. equi (strain 4047).